The sequence spans 59 residues: Large ribosomal subunit protein bL32B (59 aa).

Belongs to the bacterial ribosomal protein bL32 family.

The polypeptide is Large ribosomal subunit protein bL32B (rpmF2) (Enterococcus faecalis (strain ATCC 700802 / V583)).